A 417-amino-acid polypeptide reads, in one-letter code: DNA-directed RNA polymerase subunit beta (417 aa).

The protein belongs to the RNA polymerase beta chain family. In terms of assembly, in plastids the minimal PEP RNA polymerase catalytic core is composed of four subunits: alpha, beta, beta', and beta''. When a (nuclear-encoded) sigma factor is associated with the core the holoenzyme is formed, which can initiate transcription.

It localises to the plastid. It is found in the chloroplast. It catalyses the reaction RNA(n) + a ribonucleoside 5'-triphosphate = RNA(n+1) + diphosphate. In terms of biological role, DNA-dependent RNA polymerase catalyzes the transcription of DNA into RNA using the four ribonucleoside triphosphates as substrates. The protein is DNA-directed RNA polymerase subunit beta (rpoB) of Saponaria officinalis (Common soapwort).